The chain runs to 322 residues: Probable heme-iron transport system permease protein IsdF (322 aa).

9 helical membrane-spanning segments follow: residues 9–29 (LLFLCLLVILIATAYISFVTG), 61–81 (ILIALMVGAMLAVSGALLQAA), 89–109 (ANIIGVSSGALIMRALCMLFI), 114–134 (FYLPLLSFIGGLIPFLIIIVL), 143–163 (VSMILVGVALFVLLNGVLEIL), 179–199 (IWSDVYILAVSALLGLILTLL), 233–253 (VFLASATVAIVGQLAFLGIIV), 267–287 (VLIPFSTVIGAWLLLVADLLG), and 294–314 (LEIPANAILMIVGGPMLIYLI).

It belongs to the binding-protein-dependent transport system permease family. FecCD subfamily.

The protein localises to the cell membrane. Functionally, part of the binding-protein-dependent transport system for heme-iron. Responsible for the translocation of the substrate across the membrane. This chain is Probable heme-iron transport system permease protein IsdF (isdF), found in Staphylococcus aureus (strain bovine RF122 / ET3-1).